The primary structure comprises 152 residues: Spermine/spermidine N(1)-acetyltransferase (152 aa).

Positions 3 to 152 (INIKAVTDDN…NGEKVMVKEL (150 aa)) constitute an N-acetyltransferase domain. Acetyl-CoA-binding positions include 82–84 (FFI), 89–95 (QGKGLGK), and 122–131 (NIHAIRLYQR). Catalysis depends on Y129, which acts as the Proton donor.

Belongs to the acetyltransferase family.

It catalyses the reaction an alkane-alpha,omega-diamine + acetyl-CoA = an N-acetylalkane-alpha,omega-diamine + CoA + H(+). It carries out the reaction spermine + acetyl-CoA = N(1)-acetylspermine + CoA + H(+). The catalysed reaction is spermidine + acetyl-CoA = N(1)-acetylspermidine + CoA + H(+). The protein operates within amine and polyamine degradation; spermine degradation. Its pathway is amine and polyamine degradation; spermidine degradation. With respect to regulation, putrescine and N(8)-acetylspermidine are competitive inhibitors of spermidine acetylation. In terms of biological role, acetylates both spermidine and spermine at primary propyl amine moieties, with spermine being the preferred substrate. In Bacillus subtilis (strain 168), this protein is Spermine/spermidine N(1)-acetyltransferase (bltD).